The chain runs to 547 residues: Cytochrome P450 monooxygenase cpsD (547 aa).

The helical transmembrane segment at Leu18–Leu38 threads the bilayer. A heme-binding site is contributed by Cys476. The interval Arg528–Glu547 is disordered. The span at Arg534–Glu547 shows a compositional bias: basic and acidic residues.

This sequence belongs to the cytochrome P450 family. Heme serves as cofactor.

It is found in the membrane. It carries out the reaction campesine B + campesine C + reduced [NADPH--hemoprotein reductase] + O2 = campesine D + oxidized [NADPH--hemoprotein reductase] + 2 H2O + 2 H(+). The enzyme catalyses 2 campesine B + reduced [NADPH--hemoprotein reductase] + O2 = campesine F + oxidized [NADPH--hemoprotein reductase] + 2 H2O + H(+). It catalyses the reaction campesine C + campesine A + reduced [NADPH--hemoprotein reductase] + O2 = campesine E + oxidized [NADPH--hemoprotein reductase] + 2 H2O + 2 H(+). It participates in alkaloid biosynthesis. Its function is as follows. Cytochrome P450 monooxygenase; part of the gene cluster that mediates the biosynthesis of campesine G, a dimeric indole piperazine alkaloid that shows good insecticidal activity Galleria mellonella. Within the pathway, cpsD acts as a dimerase that simultaneously catalyzes one C-C bond (C3-C3') and two C-N bonds (C2-N16' and C2'-N16) coupling reactions between campesines B and C to produce a heterodimer with unexpected 6/5/6/6/6/6/5/6 eight-ring scaffold called campesine D. CpsD is also able to catalyze oxidative heterocoupling od campesines A with B to produce campesine F and campesines A with C to produce campesine E. The non-canonical non-ribosomal peptide synthetase cpsA catalyzes the first steps of the pathway by producing L-tryptophanal and L-valinal from their respective amino-acids. These products condensate spontaneously to form trypyl-valyl pyrazine also known as didehydrocampesine A. The NmrA-like family domain-containing oxidoreductase cpsB is the next enzyme in cps pathway and reduces the unstable didehydrocampesine A to campesine A. The methyltransferase cpsF and the acetyltransferase cpsE both recognize N13 of piperazine ring to carry out methylation and acetylation of campesine A to produce campesine C and B, respectively. The cytochrome P450 monooxygenase cpsD then acts as a dimerase that catalyzes oxidative heterocoupling between campesine B and C to produce heterodimers with unexpected 6/5/6/6/6/6/5/6 eight-ring scaffold called campesine D. Finally,the cytochrome P450 monooxygenase cpsC is a regioselective dehydrogenase that catalyzes dehydrogenation reaction towards C2-N1 to produce campesine G. This chain is Cytochrome P450 monooxygenase cpsD, found in Aspergillus campestris (strain IBT 28561).